Consider the following 349-residue polypeptide: MASGIQPDAGQILNSLINSVLVVDDALAIHYANPAAQQLLAQSSRKLFGTPLPELLSYFSLNIDLMRESLAAGQGFTDNEVTLVIDSRSHILSLTAQRLPDDFILLEMAPMDNQRRLSQEQLQHAQQIAARDLVRGLAHEIKNPLGGLRGAAQLLSKALPDPALTEYTKVIIEQADRLRNLVDRLLGPQHPGMHITESIHKVAERVVALVSMELPDNVRLIRDYDPSLPELPHDPEQIEQVLLNIVRNALQALGPEGGEITLRTRTAFQLTLHGERYRLAARIDVEDNGPGIPPHLQDTLFYPMVSGREGGTGLGLSIARNLIDQHAGKIEFTSWPGHTEFSVYLPIRK.

The region spanning 5–78 (IQPDAGQILN…SLAAGQGFTD (74 aa)) is the PAS domain. Residues 136–349 (GLAHEIKNPL…EFSVYLPIRK (214 aa)) enclose the Histidine kinase domain. Histidine 139 bears the Phosphohistidine; by autocatalysis mark. Residue lysine 329 coordinates ATP.

Post-translationally, autophosphorylated.

It is found in the cytoplasm. The enzyme catalyses ATP + protein L-histidine = ADP + protein N-phospho-L-histidine.. Functionally, member of the two-component regulatory system NtrB/NtrC, which controls expression of the nitrogen-regulated (ntr) genes in response to nitrogen limitation. Under conditions of nitrogen limitation, NtrB autophosphorylates and transfers the phosphoryl group to NtrC. In the presence of nitrogen, acts as a phosphatase that dephosphorylates and inactivates NtrC. This Salmonella typhi protein is Sensory histidine kinase/phosphatase NtrB (glnL).